The following is a 202-amino-acid chain: Putative 3-methyladenine DNA glycosylase (202 aa).

It belongs to the DNA glycosylase MPG family.

The protein is Putative 3-methyladenine DNA glycosylase of Staphylococcus haemolyticus (strain JCSC1435).